We begin with the raw amino-acid sequence, 101 residues long: Small ribosomal subunit protein cS23 (101 aa).

This sequence belongs to the chloroplast-specific ribosomal protein cS23 family. Part of the 30S ribosomal subunit.

It is found in the plastid. It localises to the chloroplast. Its function is as follows. Probably a ribosomal protein or a ribosome-associated protein. The sequence is that of Small ribosomal subunit protein cS23 (ycf65) from Cyanidium caldarium (Red alga).